Here is a 906-residue protein sequence, read N- to C-terminus: Ectonucleotide pyrophosphatase/phosphodiesterase family member 1 (906 aa).

Residues 1 to 25 (MERDGEQAGQGPRHGPAGNGRELES) are disordered. Residues 1-58 (MERDGEQAGQGPRHGPAGNGRELESPAAASLLAPMDLGEEPLEKAERARTAKDPNTYK) lie on the Cytoplasmic side of the membrane. Ser-25 carries the post-translational modification Phosphoserine. Residues 27–34 (AAASLLAP) carry the Di-leucine motif motif. Residues 59 to 79 (VLSLVLSVCVLTTILGCIFGL) form a helical; Signal-anchor for type II membrane protein membrane-spanning segment. Over 80–906 (KPSCAKEVKS…THLPIFSQED (827 aa)) the chain is Extracellular. 2 consecutive SMB domains span residues 86–126 (EVKS…VEPT) and 127–170 (HIWT…QEKK). Intrachain disulfides connect Cys-90/Cys-104, Cys-94/Cys-122, Cys-102/Cys-115, Cys-108/Cys-114, Cys-131/Cys-148, Cys-136/Cys-166, Cys-146/Cys-159, Cys-152/Cys-158, Cys-177/Cys-223, and Cys-185/Cys-397. The N-linked (GlcNAc...) asparagine glycan is linked to Asn-161. The segment at 173–573 (VEEACETIDA…APNNESHGSL (401 aa)) is phosphodiesterase. 3 residues coordinate AMP: Asp-200, Thr-238, and Asn-259. Asp-200 and Thr-238 together coordinate Zn(2+). The active-site AMP-threonine intermediate is Thr-238. CMP contacts are provided by Thr-238 and Asn-259. DTMP-binding residues include Thr-238 and Asn-259. Positions 238 and 259 each coordinate GMP. The residue at position 238 (Thr-238) is a Phosphothreonine. Residue Asn-267 is glycosylated (N-linked (GlcNAc...) asparagine). Residues Leu-272, Lys-277, and Tyr-322 each contribute to the GMP site. The AMP site is built by Lys-277 and Tyr-322. 2 residues coordinate CMP: Lys-277 and Tyr-322. Tyr-322 is a binding site for dTMP. N-linked (GlcNAc...) asparagine glycosylation occurs at Asn-323. Asp-358 contributes to the AMP binding site. 4 residues coordinate Zn(2+): Asp-358, His-362, Asp-405, and His-406. Asp-358 is a binding site for CMP. Asp-358 provides a ligand contact to dTMP. Asp-358 is a GMP binding site. His-362 is a binding site for 2',3'-cGAMP. Position 406 (His-406) interacts with AMP. Position 406 (His-406) interacts with CMP. Residue His-406 participates in dTMP binding. A GMP-binding site is contributed by His-406. 6 disulfide bridges follow: Cys-413-Cys-512, Cys-462-Cys-849, Cys-596-Cys-653, Cys-607-Cys-707, Cys-609-Cys-692, and Cys-819-Cys-829. N-linked (GlcNAc...) asparagine glycosylation occurs at Asn-459. Ser-514 is a 2',3'-cGAMP binding site. Position 517 (His-517) interacts with AMP. His-517 contributes to the Zn(2+) binding site. A CMP-binding site is contributed by His-517. Position 517 (His-517) interacts with dTMP. His-517 is a binding site for GMP. Asn-567 and Asn-624 each carry an N-linked (GlcNAc...) asparagine glycan. Positions 579 to 628 (KPIYTPSHPKEESFLSQCPIKSVSSDLGCTCDPSIVPIMDFEKQFNLTTD) are linker. The interval 635 to 906 (SMTVPNGRPR…THLPIFSQED (272 aa)) is nuclease-like domain. Residues Asp-781, Asp-783, Asp-785, Arg-787, and Asp-789 each contribute to the Ca(2+) site.

The protein belongs to the nucleotide pyrophosphatase/phosphodiesterase family. Ectonucleotide pyrophosphatase/phosphodiesterase family member 1: Homodimer. Ectonucleotide pyrophosphatase/phosphodiesterase family member 1: Interacts with INSR; leading to inhibit INSR autophosphorylation and subsequent activation of INSR kinase activity. Ectonucleotide pyrophosphatase/phosphodiesterase family member 1, secreted form: Monomeric. Zn(2+) serves as cofactor. Post-translationally, the secreted form is produced through cleavage at Lys-85 by intracellular processing.

It localises to the cell membrane. The protein resides in the basolateral cell membrane. Its subcellular location is the secreted. It catalyses the reaction Hydrolytically removes 5'-nucleotides successively from the 3'-hydroxy termini of 3'-hydroxy-terminated oligonucleotides.. The enzyme catalyses a ribonucleoside 5'-triphosphate + H2O = a ribonucleoside 5'-phosphate + diphosphate + H(+). It carries out the reaction ATP + H2O = AMP + diphosphate + H(+). The catalysed reaction is UTP + H2O = UMP + diphosphate + H(+). It catalyses the reaction GTP + H2O = GMP + diphosphate + H(+). The enzyme catalyses CTP + H2O = CMP + diphosphate + H(+). It carries out the reaction 2',3'-cGAMP + 2 H2O = GMP + AMP + 2 H(+). The catalysed reaction is P(1),P(4)-bis(5'-adenosyl) tetraphosphate + H2O = AMP + ATP + 2 H(+). It catalyses the reaction 3',5'-cyclic AMP + H2O = AMP + H(+). At low concentrations of ATP, a phosphorylated intermediate is formed which inhibits further hydrolysis. Its function is as follows. Nucleotide pyrophosphatase that generates diphosphate (PPi) and functions in bone mineralization and soft tissue calcification by regulating pyrophosphate levels. PPi inhibits bone mineralization and soft tissue calcification by binding to nascent hydroxyapatite crystals, thereby preventing further growth of these crystals. Preferentially hydrolyzes ATP, but can also hydrolyze other nucleoside 5' triphosphates such as GTP, CTP and UTP to their corresponding monophosphates with release of pyrophosphate, as well as diadenosine polyphosphates, and also 3',5'-cAMP to AMP. May also be involved in the regulation of the availability of nucleotide sugars in the endoplasmic reticulum and Golgi, and the regulation of purinergic signaling. Inhibits ectopic joint calcification and maintains articular chondrocytes by repressing hedgehog signaling; it is however unclear whether hedgehog inhibition is direct or indirect. Appears to modulate insulin sensitivity. Also involved in melanogenesis. Also able to hydrolyze 2',3'-cGAMP (cyclic GMP-AMP), a second messenger that activates TMEM173/STING and triggers type-I interferon production. 2',3'-cGAMP degradation takes place in the lumen or extracellular space, and not in the cytosol where it is produced; the role of 2',3'-cGAMP hydrolysis is therefore unclear. Not able to hydrolyze the 2',3'-cGAMP linkage isomer 3'-3'-cGAMP. The sequence is that of Ectonucleotide pyrophosphatase/phosphodiesterase family member 1 from Rattus norvegicus (Rat).